The following is a 447-amino-acid chain: Rab GDP dissociation inhibitor alpha (447 aa).

The residue at position 427 (Ser427) is a Phosphoserine.

It belongs to the Rab GDI family. As to quaternary structure, interacts with RHOH. Interacts with the non-phosphorylated forms of RAB1A, RAB3A, RAB5A, RAB5B, RAB5C, RAB8A, RAB8B, RAB10, RAB12, RAB35, and RAB43. As to expression, high expression in brain, lower in other tissues.

The protein localises to the cytoplasm. It is found in the golgi apparatus. It localises to the trans-Golgi network. In terms of biological role, regulates the GDP/GTP exchange reaction of most Rab proteins by inhibiting the dissociation of GDP from them, and the subsequent binding of GTP to them. Promotes the dissociation of GDP-bound Rab proteins from the membrane and inhibits their activation. Promotes the dissociation of RAB1A, RAB3A, RAB5A and RAB10 from membranes. This is Rab GDP dissociation inhibitor alpha (Gdi1) from Rattus norvegicus (Rat).